Reading from the N-terminus, the 282-residue chain is NH(3)-dependent NAD(+) synthetase (282 aa).

51–58 (GISGGVDS) serves as a coordination point for ATP. D57 is a binding site for Mg(2+). Residue R148 coordinates deamido-NAD(+). T168 lines the ATP pocket. E173 serves as a coordination point for Mg(2+). 2 residues coordinate deamido-NAD(+): K181 and D188. Positions 197 and 219 each coordinate ATP. Residue 268 to 269 (HK) participates in deamido-NAD(+) binding.

The protein belongs to the NAD synthetase family. Homodimer.

It carries out the reaction deamido-NAD(+) + NH4(+) + ATP = AMP + diphosphate + NAD(+) + H(+). The protein operates within cofactor biosynthesis; NAD(+) biosynthesis; NAD(+) from deamido-NAD(+) (ammonia route): step 1/1. Functionally, catalyzes the ATP-dependent amidation of deamido-NAD to form NAD. Uses ammonia as a nitrogen source. The chain is NH(3)-dependent NAD(+) synthetase from Burkholderia lata (strain ATCC 17760 / DSM 23089 / LMG 22485 / NCIMB 9086 / R18194 / 383).